Reading from the N-terminus, the 468-residue chain is uncharacterized protein (468 aa).

The signal sequence occupies residues 1–19; it reads MRVLSVLLVALTVAGSAYS. N-linked (GlcNAc...) asparagine glycosylation is found at Asn-86 and Asn-334. Positions 401–421 are disordered; sequence NPSTNLPETSPPTEQPTAPPA. The segment covering 409-421 has biased composition (pro residues); the sequence is TSPPTEQPTAPPA. Asn-435 is a glycosylation site (N-linked (GlcNAc...) asparagine). Asn-444 carries GPI-like-anchor amidated asparagine lipidation. Positions 445 to 468 are cleaved as a propeptide — removed in mature form; that stretch reads SASSIEMSKLVVAILSLFILAFFH.

The protein localises to the cell membrane. This is an uncharacterized protein from Dictyostelium discoideum (Social amoeba).